The primary structure comprises 267 residues: Indole-3-glycerol phosphate synthase (267 aa).

This sequence belongs to the TrpC family.

The catalysed reaction is 1-(2-carboxyphenylamino)-1-deoxy-D-ribulose 5-phosphate + H(+) = (1S,2R)-1-C-(indol-3-yl)glycerol 3-phosphate + CO2 + H2O. The protein operates within amino-acid biosynthesis; L-tryptophan biosynthesis; L-tryptophan from chorismate: step 4/5. The sequence is that of Indole-3-glycerol phosphate synthase from Cupriavidus pinatubonensis (strain JMP 134 / LMG 1197) (Cupriavidus necator (strain JMP 134)).